A 55-amino-acid polypeptide reads, in one-letter code: Large ribosomal subunit protein bL33 (55 aa).

Belongs to the bacterial ribosomal protein bL33 family.

The protein is Large ribosomal subunit protein bL33 of Orientia tsutsugamushi (strain Boryong) (Rickettsia tsutsugamushi).